The sequence spans 437 residues: Endoplasmic reticulum protein SC65 (437 aa).

Positions 1-18 (MARVAWGLLWLLLGSAGA) are cleaved as a signal peptide. Asparagine 361 is a glycosylation site (N-linked (GlcNAc...) asparagine). 2 stretches are compositionally biased toward acidic residues: residues 381–413 (DEME…EEGM) and 428–437 (AEAEPEPELA). Positions 381–437 (DEMELEETEPPLEPEDALSDAEFEGEGDYEEGMYADWWQEPDAKGDEAEAEPEPELA) are disordered.

Belongs to the leprecan family. Interacts with PLOD1, P3H3 and PPIB. Identified in a complex with PLOD1 and P3H3. In terms of tissue distribution, detected in fibroblasts (at protein level). Detected in spleen, prostate, testis, ovary, colon, pancreas, kidney, placenta and heart.

The protein localises to the endoplasmic reticulum. Functionally, part of a complex composed of PLOD1, P3H3 and P3H4 that catalyzes hydroxylation of lysine residues in collagen alpha chains and is required for normal assembly and cross-linking of collagen fibrils. Required for normal bone density and normal skin stability via its role in hydroxylation of lysine residues in collagen alpha chains and in collagen fibril assembly. This chain is Endoplasmic reticulum protein SC65, found in Homo sapiens (Human).